A 297-amino-acid polypeptide reads, in one-letter code: Transcription factor bHLH129 (297 aa).

The interval 1 to 145 (MYPPNSSKST…SSSHQEHNSL (145 aa)) is disordered. A Phosphoserine modification is found at serine 35. Positions 68–82 (SSIGFDSNASSSSSL) are enriched in low complexity. Residues 111 to 121 (PNGGYGGGGEQ) are compositionally biased toward gly residues. The residue at position 138 (serine 138) is a Phosphoserine. The 51-residue stretch at 239–289 (FATHPRSIAERERRTRISGKLKKLQELVPNMDKQTSYADMLDLAVEHIKGL) folds into the bHLH domain.

As to quaternary structure, homodimer.

It is found in the nucleus. This Arabidopsis thaliana (Mouse-ear cress) protein is Transcription factor bHLH129 (BHLH129).